A 643-amino-acid polypeptide reads, in one-letter code: Phosphomethylpyrimidine synthase (643 aa).

Residues Asn248, Met277, Tyr306, His342, 362–364, 403–406, and Glu442 each bind substrate; these read SRG and DGLR. His446 lines the Zn(2+) pocket. Substrate is bound at residue Tyr469. Zn(2+) is bound at residue His510. [4Fe-4S] cluster contacts are provided by Cys590, Cys593, and Cys598.

It belongs to the ThiC family. In terms of assembly, homodimer. [4Fe-4S] cluster is required as a cofactor.

The catalysed reaction is 5-amino-1-(5-phospho-beta-D-ribosyl)imidazole + S-adenosyl-L-methionine = 4-amino-2-methyl-5-(phosphooxymethyl)pyrimidine + CO + 5'-deoxyadenosine + formate + L-methionine + 3 H(+). The protein operates within cofactor biosynthesis; thiamine diphosphate biosynthesis. Catalyzes the synthesis of the hydroxymethylpyrimidine phosphate (HMP-P) moiety of thiamine from aminoimidazole ribotide (AIR) in a radical S-adenosyl-L-methionine (SAM)-dependent reaction. The protein is Phosphomethylpyrimidine synthase of Burkholderia lata (strain ATCC 17760 / DSM 23089 / LMG 22485 / NCIMB 9086 / R18194 / 383).